A 637-amino-acid chain; its full sequence is Threonine--tRNA ligase (637 aa).

The 61-residue stretch at 1–61 (MPNVKLPDGN…KEDCSLIIVT (61 aa)) folds into the TGS domain. The segment at 242 to 533 (DHRKLGKALD…LIEHYAGKLP (292 aa)) is catalytic. Cysteine 333, histidine 384, and histidine 510 together coordinate Zn(2+).

The protein belongs to the class-II aminoacyl-tRNA synthetase family. Homodimer. Zn(2+) is required as a cofactor.

Its subcellular location is the cytoplasm. The catalysed reaction is tRNA(Thr) + L-threonine + ATP = L-threonyl-tRNA(Thr) + AMP + diphosphate + H(+). In terms of biological role, catalyzes the attachment of threonine to tRNA(Thr) in a two-step reaction: L-threonine is first activated by ATP to form Thr-AMP and then transferred to the acceptor end of tRNA(Thr). Also edits incorrectly charged L-seryl-tRNA(Thr). The sequence is that of Threonine--tRNA ligase from Legionella pneumophila (strain Paris).